We begin with the raw amino-acid sequence, 212 residues long: Protein DEPP1 (212 aa).

3 disordered regions span residues 20 to 39 (EEML…SLDD), 49 to 79 (QPTS…GRPA), and 113 to 176 (QEKQ…SDLR). Over residues 113-124 (QEKQPSQRDLPR) the composition is skewed to basic and acidic residues.

As to expression, expressed in various tissues, including pancreas, placenta, ovary, testis and kidney.

The protein resides in the cytoplasm. The protein localises to the peroxisome. It is found in the mitochondrion. Functionally, acts as a critical modulator of FOXO3-induced autophagy via increased cellular ROS. In Homo sapiens (Human), this protein is Protein DEPP1.